The sequence spans 147 residues: Small ribosomal subunit protein uS12 (147 aa).

It belongs to the universal ribosomal protein uS12 family. Part of the 30S ribosomal subunit.

In terms of biological role, with S4 and S5 plays an important role in translational accuracy. Located at the interface of the 30S and 50S subunits. The sequence is that of Small ribosomal subunit protein uS12 from Hyperthermus butylicus (strain DSM 5456 / JCM 9403 / PLM1-5).